A 255-amino-acid polypeptide reads, in one-letter code: Uracil-DNA glycosylase (255 aa).

The Proton acceptor role is filled by D90.

It belongs to the uracil-DNA glycosylase (UDG) superfamily. UNG family.

The protein localises to the host nucleus. It carries out the reaction Hydrolyzes single-stranded DNA or mismatched double-stranded DNA and polynucleotides, releasing free uracil.. Its function is as follows. Excises uracil residues from the DNA which can arise as a result of misincorporation of dUMP residues by DNA polymerase or deamination of cytosines. Therefore may reduce deleterious uracil incorporation into the viral genome, particularly in terminally differentiated cells which lack DNA repair enzymes. The chain is Uracil-DNA glycosylase from Equine herpesvirus 2 (strain 86/87) (EHV-2).